A 571-amino-acid chain; its full sequence is Vesicle-associated protein 1-4 (571 aa).

One can recognise an MSP 1 domain in the interval 1 to 126 (MSTDELLTFD…EETIFKIIYV (126 aa)). Positions 132-154 (QSPVQEGLEDGSSPSASVSDKGN) are disordered. Over residues 143 to 153 (SSPSASVSDKG) the composition is skewed to polar residues. In terms of domain architecture, MSP 2 spans 176 to 296 (LLIIDPVDVQ…EETRLKVMYV (121 aa)). A disordered region spans residues 297–322 (TPPQPPSPVQEGTEEGSSPRASVSDN). The span at 311–322 (EGSSPRASVSDN) shows a compositional bias: polar residues. Positions 356 to 493 (PQYQVFINFR…KWKEALSSVF (138 aa)) constitute a TIR domain. Residue glutamate 430 is part of the active site.

It belongs to the VAMP-associated protein (VAP) (TC 9.B.17) family.

The enzyme catalyses NAD(+) + H2O = ADP-D-ribose + nicotinamide + H(+). Its function is as follows. May play a role in vesicle trafficking. This Arabidopsis thaliana (Mouse-ear cress) protein is Vesicle-associated protein 1-4 (PVA14).